A 356-amino-acid chain; its full sequence is Viral cathepsin (356 aa).

A signal peptide spans 1–40 (MYANALVCLNPSFIKLQFHIVCTMNIIGIVTLALCSAASA). A propeptide spans 41-144 (ADEGAAYNLQ…IILNQPPDKG (104 aa)) (activation peptide). 3 cysteine pairs are disulfide-bonded: Cys-165-Cys-206, Cys-199-Cys-239, and Cys-295-Cys-343. Cys-168 is a catalytic residue. Active-site residues include His-302 and Asn-322.

Belongs to the peptidase C1 family. In terms of processing, synthesized as an inactive proenzyme and activated by proteolytic removal of the inhibitory propeptide.

The enzyme catalyses Endopeptidase of broad specificity, hydrolyzing substrates of both cathepsin L and cathepsin B.. Cysteine protease that plays an essential role in host liquefaction to facilitate horizontal transmission of the virus. May participate in the degradation of foreign protein expressed by the baculovirus system. This Lepidoptera (butterflies and moths) protein is Viral cathepsin (VCATH).